We begin with the raw amino-acid sequence, 1159 residues long: WASH complex subunit 5 (1159 aa).

Residue serine 917 is modified to Phosphoserine.

This sequence belongs to the strumpellin family. As to quaternary structure, component of the WASH core complex also described as WASH regulatory complex (SHRC) composed of WASH (WASHC1, WASH2P or WASH3P), WASHC2 (WASHC2A or WASHC2C), WASHC3, WASHC4 and WASHC5. The WASH core complex associates via WASHC2 with the F-actin-capping protein dimer (formed by CAPZA1, CAPZA2 or CAPZA3 and CAPZB) in a transient or substoichiometric manner which was initially described as WASH complex. Interacts with VCP, PI4K2A.

The protein resides in the cytoplasm. The protein localises to the cytosol. Its subcellular location is the endoplasmic reticulum. It localises to the early endosome. In terms of biological role, acts as a component of the WASH core complex that functions as a nucleation-promoting factor (NPF) at the surface of endosomes, where it recruits and activates the Arp2/3 complex to induce actin polymerization, playing a key role in the fission of tubules that serve as transport intermediates during endosome sorting. May be involved in axonal outgrowth. Involved in cellular localization of ADRB2. Involved in cellular trafficking of BLOC-1 complex cargos such as ATP7A and VAMP7. The protein is WASH complex subunit 5 of Pongo abelii (Sumatran orangutan).